Here is a 125-residue protein sequence, read N- to C-terminus: S-adenosylmethionine decarboxylase proenzyme (125 aa).

Serine 71 acts as the Schiff-base intermediate with substrate; via pyruvic acid in catalysis. At serine 71 the chain carries Pyruvic acid (Ser); by autocatalysis. Histidine 76 acts as the Proton acceptor; for processing activity in catalysis. Residue cysteine 91 is the Proton donor; for catalytic activity of the active site.

It belongs to the prokaryotic AdoMetDC family. Type 1 subfamily. Heterotetramer of two alpha and two beta chains arranged as a dimer of alpha/beta heterodimers. Pyruvate serves as cofactor. Post-translationally, is synthesized initially as an inactive proenzyme. Formation of the active enzyme involves a self-maturation process in which the active site pyruvoyl group is generated from an internal serine residue via an autocatalytic post-translational modification. Two non-identical subunits are generated from the proenzyme in this reaction, and the pyruvate is formed at the N-terminus of the alpha chain, which is derived from the carboxyl end of the proenzyme. The post-translation cleavage follows an unusual pathway, termed non-hydrolytic serinolysis, in which the side chain hydroxyl group of the serine supplies its oxygen atom to form the C-terminus of the beta chain, while the remainder of the serine residue undergoes an oxidative deamination to produce ammonia and the pyruvoyl group blocking the N-terminus of the alpha chain.

It carries out the reaction S-adenosyl-L-methionine + H(+) = S-adenosyl 3-(methylsulfanyl)propylamine + CO2. It functions in the pathway amine and polyamine biosynthesis; S-adenosylmethioninamine biosynthesis; S-adenosylmethioninamine from S-adenosyl-L-methionine: step 1/1. In terms of biological role, catalyzes the decarboxylation of S-adenosylmethionine to S-adenosylmethioninamine (dcAdoMet), the propylamine donor required for the synthesis of the polyamines spermine and spermidine from the diamine putrescine. The polypeptide is S-adenosylmethionine decarboxylase proenzyme (Pyrobaculum islandicum (strain DSM 4184 / JCM 9189 / GEO3)).